An 843-amino-acid polypeptide reads, in one-letter code: Probable disease resistance protein At5g47250 (843 aa).

Residues 28–58 are a coiled coil; that stretch reads MLKENLVLLKSAFDELKAEKEDVVNRVNAGE. The region spanning 141-440 is the NB-ARC domain; it reads TEQPPPPVVE…GEGFIDEKDG (300 aa). 183–190 is a binding site for ATP; the sequence is GMGGVGKT. LRR repeat units follow at residues 510 to 531, 535 to 556, 559 to 581, 583 to 604, and 606 to 628; these read TVTKMSLFNNEIKNIPDDPEFP, NLVTLFLQNNRLVDIVGKFFLV, TLVVLDLSWNFQITELPKGISAL, SLRLLNLSGTSIKHLPEGLGVL, and KLIHLNLESTSNLRSVGLISELQ.

It belongs to the disease resistance NB-LRR family.

In terms of biological role, probable disease resistance protein. The protein is Probable disease resistance protein At5g47250 of Arabidopsis thaliana (Mouse-ear cress).